Consider the following 419-residue polypeptide: DNA polymerase IV (419 aa).

The UmuC domain maps to 12-193 (IFHIDMNCFY…MSVEEMYGIG (182 aa)). Asp-16 and Asp-112 together coordinate Mg(2+). Glu-113 is a catalytic residue. The disordered stretch occupies residues 388–419 (IITSQKNKNESQENQQPRTSFQKDFLDDYKKP).

Belongs to the DNA polymerase type-Y family. In terms of assembly, monomer. Requires Mg(2+) as cofactor.

Its subcellular location is the cytoplasm. It catalyses the reaction DNA(n) + a 2'-deoxyribonucleoside 5'-triphosphate = DNA(n+1) + diphosphate. Its function is as follows. Poorly processive, error-prone DNA polymerase involved in untargeted mutagenesis. Copies undamaged DNA at stalled replication forks, which arise in vivo from mismatched or misaligned primer ends. These misaligned primers can be extended by PolIV. Exhibits no 3'-5' exonuclease (proofreading) activity. May be involved in translesional synthesis, in conjunction with the beta clamp from PolIII. The protein is DNA polymerase IV of Oceanobacillus iheyensis (strain DSM 14371 / CIP 107618 / JCM 11309 / KCTC 3954 / HTE831).